Here is a 208-residue protein sequence, read N- to C-terminus: MAQGNLYILSAPSGAGKSSLISALLNQQQDNKMMVSVSHTTRQPRPGEQEGVHYYFVSVEAFESLIEQDLFLEYAKVFGGNYYGTSLPAIEENLAKGIDVFLDIDWQGAQQIRQKVPNVKSIFILPPSLAELERRLIGRGQDSTEVIAARMSKAIDEISHYNEYDYVIVNDVFEQALADFQAILRAERLTLTHQQKQNQALIEQLLAK.

The region spanning 4 to 185 (GNLYILSAPS…ALADFQAILR (182 aa)) is the Guanylate kinase-like domain. 11–18 (APSGAGKS) is an ATP binding site.

This sequence belongs to the guanylate kinase family.

It is found in the cytoplasm. The enzyme catalyses GMP + ATP = GDP + ADP. Its function is as follows. Essential for recycling GMP and indirectly, cGMP. In Pasteurella multocida (strain Pm70), this protein is Guanylate kinase (gmk).